A 518-amino-acid polypeptide reads, in one-letter code: Probable inorganic carbon transporter subunit DabB (518 aa).

A run of 13 helical transmembrane segments spans residues 3-23, 37-57, 65-85, 114-134, 165-185, 207-227, 242-262, 264-284, 302-322, 358-378, 379-399, 403-423, and 442-462; these read MQWV…LGSL, ISLL…FEWV, WVGV…IAFV, CVVT…WIAI, AEAC…TWFI, MLLA…GWLI, AGII…IVLS, MAQW…ALVM, MGLM…LHLV, WWFA…LADL, SGPY…IAER, LTSS…VVYT, and WKGD…YFLL.

It belongs to the inorganic carbon transporter (TC 9.A.2) DabB family. As to quaternary structure, forms a complex with DabA.

The protein localises to the cell inner membrane. With respect to regulation, intracellular DIC accumulation is sensitive to CCCP (carbonyl cyanide-m-chlorophenylhydrazone) and DCCD (N,N-dicyclohexylcarbodiimide) and therefore likely driven by either proton gradient, ATP, or both. Its function is as follows. Part of an energy-coupled inorganic carbon pump involved in transport of dissolved inorganic carbon (DIC) with downstream gene dabA (Tcr_0854); has been suggested to be a proton-DIC symporter. This Hydrogenovibrio crunogenus (strain DSM 25203 / XCL-2) (Thiomicrospira crunogena) protein is Probable inorganic carbon transporter subunit DabB.